A 137-amino-acid chain; its full sequence is Hemoglobin subunit alpha-2 (137 aa).

Residues 1–137 enclose the Globin domain; that stretch reads DDRSHILAIW…VGGSLTSKYR (137 aa). An O2-binding site is contributed by H54. H83 provides a ligand contact to heme b.

It belongs to the globin family. The N-terminus of the mature protein is acetylated. In terms of tissue distribution, red blood cells.

The protein is Hemoglobin subunit alpha-2 of Telmatobius peruvianus (Andean frog).